Here is a 311-residue protein sequence, read N- to C-terminus: GTP cyclohydrolase MptA (311 aa).

This sequence belongs to the GTP cyclohydrolase IV family. In terms of assembly, homodimer. It depends on Fe(2+) as a cofactor.

It carries out the reaction GTP + H2O = 7,8-dihydroneopterin 2',3'-cyclic phosphate + formate + diphosphate + H(+). The protein operates within cofactor biosynthesis; 5,6,7,8-tetrahydromethanopterin biosynthesis. Its function is as follows. Converts GTP to 7,8-dihydro-D-neopterin 2',3'-cyclic phosphate, the first intermediate in the biosynthesis of coenzyme methanopterin. The polypeptide is GTP cyclohydrolase MptA (Methanobrevibacter smithii (strain ATCC 35061 / DSM 861 / OCM 144 / PS)).